Here is a 190-residue protein sequence, read N- to C-terminus: MLLSDRDLRAEITAGRLGIEPFDDALVQPSSVDVRLDCMFRVFNNTRYTHIDPAKQQDELTSLVEPQDGEPFVLHPGEFVLGSTLELITLPDDLAGRLEGKSSLGRLGLLTHSTAGFIDPGFSGHITLELSNVANLPITLWPGMKIGQLCILRLTSPAEHPYGSTRVGSKYQGQRGPTPSRSYQNFITST.

DCTP-binding positions include 101-106, Asp119, 127-129, Gln148, Tyr162, and Gln174; these read KSSLGR and TLE. The Proton donor/acceptor role is filled by Glu129. A disordered region spans residues 163–190; it reads GSTRVGSKYQGQRGPTPSRSYQNFITST. Over residues 171–190 the composition is skewed to polar residues; that stretch reads YQGQRGPTPSRSYQNFITST.

It belongs to the dCTP deaminase family. Homotrimer.

It catalyses the reaction dCTP + 2 H2O = dUMP + NH4(+) + diphosphate. Its pathway is pyrimidine metabolism; dUMP biosynthesis; dUMP from dCTP: step 1/1. In terms of biological role, bifunctional enzyme that catalyzes both the deamination of dCTP to dUTP and the hydrolysis of dUTP to dUMP without releasing the toxic dUTP intermediate. In Mycolicibacterium paratuberculosis (strain ATCC BAA-968 / K-10) (Mycobacterium paratuberculosis), this protein is dCTP deaminase, dUMP-forming.